A 1629-amino-acid polypeptide reads, in one-letter code: Ferredoxin-dependent glutamate synthase 2, chloroplastic (1629 aa).

A chloroplast-targeting transit peptide spans 1-107 (MALQSPGATG…LEDIISERGA (107 aa)). The active-site For GATase activity is the Cys-108. The Glutamine amidotransferase type-2 domain maps to 108–507 (CGVGFIANLE…PGMMISVDLE (400 aa)). 1186–1243 (LAETQKTLIGNGLRERVIIRVDGGFKSGVDVLIAAAMGADEYGFGTLAMIATGCIMAR) is a binding site for FMN. Cys-1239, Cys-1245, and Cys-1250 together coordinate [3Fe-4S] cluster. The segment at 1599-1629 (SEEDTPEANSDHILKTTTGDEEQVSSTLAEK) is disordered.

It belongs to the glutamate synthase family. Requires [3Fe-4S] cluster as cofactor. FAD is required as a cofactor. It depends on FMN as a cofactor. As to expression, expressed predominantly in roots and slightly in leaves. Low expression in the leaf mesophyll and phloem companion cell-sieve element complex.

The protein resides in the plastid. It is found in the chloroplast stroma. It carries out the reaction 2 oxidized [2Fe-2S]-[ferredoxin] + 2 L-glutamate = L-glutamine + 2 reduced [2Fe-2S]-[ferredoxin] + 2-oxoglutarate + 2 H(+). It participates in amino-acid biosynthesis; L-glutamate biosynthesis via GLT pathway; L-glutamate from 2-oxoglutarate and L-glutamine (ferredoxin route): step 1/1. It functions in the pathway energy metabolism; nitrogen metabolism. May play a role in primary nitrogen assimilation in roots. Could supply a constitutive level of glutamate to maintain a basal level of protein synthesis. The protein is Ferredoxin-dependent glutamate synthase 2, chloroplastic (GLU2) of Arabidopsis thaliana (Mouse-ear cress).